We begin with the raw amino-acid sequence, 283 residues long: Elongation factor Ts (283 aa).

The involved in Mg(2+) ion dislocation from EF-Tu stretch occupies residues T80–V83.

The protein belongs to the EF-Ts family.

It is found in the cytoplasm. Associates with the EF-Tu.GDP complex and induces the exchange of GDP to GTP. It remains bound to the aminoacyl-tRNA.EF-Tu.GTP complex up to the GTP hydrolysis stage on the ribosome. The protein is Elongation factor Ts of Histophilus somni (strain 129Pt) (Haemophilus somnus).